The chain runs to 53 residues: UPF0391 membrane protein BURPS1106A_A2993 (53 aa).

2 consecutive transmembrane segments (helical) span residues 5–25 (ALIF…GIAA) and 30–50 (IAKI…VLGV).

It belongs to the UPF0391 family.

Its subcellular location is the cell membrane. In Burkholderia pseudomallei (strain 1106a), this protein is UPF0391 membrane protein BURPS1106A_A2993.